The following is a 201-amino-acid chain: Acireductone dioxygenase 2 (201 aa).

Residues histidine 83, histidine 85, glutamate 89, and histidine 129 each contribute to the Fe(2+) site. Residues histidine 83, histidine 85, glutamate 89, and histidine 129 each coordinate Ni(2+).

Belongs to the acireductone dioxygenase (ARD) family. Fe(2+) is required as a cofactor. Requires Ni(2+) as cofactor.

It localises to the cytoplasm. It is found in the nucleus. It carries out the reaction 1,2-dihydroxy-5-(methylsulfanyl)pent-1-en-3-one + O2 = 4-methylsulfanyl-2-oxobutanoate + formate + 2 H(+). The enzyme catalyses 1,2-dihydroxy-5-(methylsulfanyl)pent-1-en-3-one + O2 = 3-(methylsulfanyl)propanoate + CO + formate + 2 H(+). It functions in the pathway amino-acid biosynthesis; L-methionine biosynthesis via salvage pathway; L-methionine from S-methyl-5-thio-alpha-D-ribose 1-phosphate: step 5/6. Catalyzes 2 different reactions between oxygen and the acireductone 1,2-dihydroxy-3-keto-5-methylthiopentene (DHK-MTPene) depending upon the metal bound in the active site. Fe-containing acireductone dioxygenase (Fe-ARD) produces formate and 2-keto-4-methylthiobutyrate (KMTB), the alpha-ketoacid precursor of methionine in the methionine recycle pathway. Ni-containing acireductone dioxygenase (Ni-ARD) produces methylthiopropionate, carbon monoxide and formate, and does not lie on the methionine recycle pathway. This Coprinopsis cinerea (strain Okayama-7 / 130 / ATCC MYA-4618 / FGSC 9003) (Inky cap fungus) protein is Acireductone dioxygenase 2.